The sequence spans 380 residues: Flap endonuclease 1-A (380 aa).

Residues 1-105 (MGIKGLTKLL…EELAKRFSKR (105 aa)) form an N-domain region. D34 contributes to the Mg(2+) binding site. Residue R71 coordinates DNA. D87, E159, E161, D180, and D182 together coordinate Mg(2+). The interval 123-254 (AVEKLSKRTV…QTALKLIRQH (132 aa)) is I-domain. E159 lines the DNA pocket. 2 residues coordinate DNA: G232 and D234. D234 contributes to the Mg(2+) binding site. Residues 336–344 (SQGRLESFF) are interaction with PCNA. A disordered region spans residues 351-380 (SAPLKRKETSDKTSKAAAANKKTKAGGKKK). Over residues 355–364 (KRKETSDKTS) the composition is skewed to basic and acidic residues. Over residues 371–380 (KKTKAGGKKK) the composition is skewed to basic residues.

The protein belongs to the XPG/RAD2 endonuclease family. FEN1 subfamily. Interacts with PCNA. Three molecules of FEN1 bind to one PCNA trimer with each molecule binding to one PCNA monomer. PCNA stimulates the nuclease activity without altering cleavage specificity. It depends on Mg(2+) as a cofactor. In terms of processing, phosphorylated. Phosphorylation upon DNA damage induces relocalization to the nuclear plasma.

Its subcellular location is the nucleus. It localises to the nucleolus. The protein localises to the nucleoplasm. It is found in the mitochondrion. Structure-specific nuclease with 5'-flap endonuclease and 5'-3' exonuclease activities involved in DNA replication and repair. During DNA replication, cleaves the 5'-overhanging flap structure that is generated by displacement synthesis when DNA polymerase encounters the 5'-end of a downstream Okazaki fragment. It enters the flap from the 5'-end and then tracks to cleave the flap base, leaving a nick for ligation. Also involved in the long patch base excision repair (LP-BER) pathway, by cleaving within the apurinic/apyrimidinic (AP) site-terminated flap. Acts as a genome stabilization factor that prevents flaps from equilibrating into structures that lead to duplications and deletions. Also possesses 5'-3' exonuclease activity on nicked or gapped double-stranded DNA, and exhibits RNase H activity. Also involved in replication and repair of rDNA and in repairing mitochondrial DNA. The sequence is that of Flap endonuclease 1-A from Sorghum bicolor (Sorghum).